The chain runs to 1230 residues: SAM and SH3 domain-containing protein 1 (1230 aa).

Positions 1-10 (MEEDAGAASP) are enriched in low complexity. A disordered region spans residues 1–30 (MEEDAGAASPAPEPEPEVDPARELEPEAGV). Phosphoserine occurs at positions 83 and 241. Disordered stretches follow at residues 211 to 249 (RQSSTLDPADWPDGSYPTLDGSSTCNSREQSDDETEDSV) and 275 to 337 (KKPS…LDTW). Residues 275–297 (KKPSAEGGEEHVFENSPVQDERS) are compositionally biased toward basic and acidic residues. Low complexity predominate over residues 324–336 (SLTPSPSSSSLDT). Phosphoserine is present on Ser-400. Disordered regions lie at residues 439–566 (PRIS…YDTD), 610–633 (EEKPKRPTRRRKKGRPSQPKSVED), and 705–792 (VDNQ…KSCD). Residues 461–470 (KYSSPVSEQD) show a composition bias toward polar residues. The span at 485 to 494 (PDSEHVDKPK) shows a compositional bias: basic and acidic residues. Positions 498–516 (GGSVESLRSSLSGQSSMSG) are enriched in low complexity. Positions 517–529 (QTVSTTDSSTSNR) are enriched in polar residues. The SH3 domain maps to 547-608 (PFCGRARVHT…KFIYVDVLNE (62 aa)). The segment covering 615-624 (RPTRRRKKGR) has biased composition (basic residues). Positions 626-690 (SQPKSVEDLL…LTAVELLQEY (65 aa)) constitute an SAM 1 domain. Residues 737-758 (VLSTKSSTESNLKSFTRSQPGN) are compositionally biased toward polar residues. The segment covering 768-779 (GEVRKQGEEGRL) has biased composition (basic and acidic residues). Residues Ser-813 and Ser-831 each carry the phosphoserine modification. Disordered regions lie at residues 818–875 (EGPE…LPRG) and 915–1045 (PPQC…PWLA). Residues 844-852 (NVPTEMPET) are required for interaction with TRAF6. Positions 852–868 (TCSQNVPEVPQKTSACT) are enriched in polar residues. A compositionally biased stretch (basic and acidic residues) spans 940–956 (GLRKGHDHHPLGTKEGV). Polar residues predominate over residues 962-972 (APETRTQSRHP). Low complexity predominate over residues 1008–1019 (SPASPVSPSDCP). The SAM 2 domain maps to 1160–1224 (GCVASMSDWL…ITAARLFKLP (65 aa)).

As to quaternary structure, interacts with GNAS. Interacts with IQGAP1. Interacts with TRAF6 (via C-terminus); the interaction is LPS-dependent. Interacts with MAP3K7, CHUK and IKBKB. As to expression, expressed in the microvascular endothelium of various organs, as well as in parenchymal cells. Expressed in the endothelium but not lymphoid cells of spleen and thymus.

It localises to the cytoplasm. Functionally, is a positive regulator of NF-kappa-B signaling downstream of TLR4 activation. It acts as a scaffold molecule to assemble a molecular complex that includes TRAF6, MAP3K7, CHUK and IKBKB, thereby facilitating NF-kappa-B signaling activation. Regulates TRAF6 and MAP3K7 ubiquitination. Involved in the regulation of cell mobility. Regulates lipolysaccharide (LPS)-induced endothelial cell migration. Is involved in the regulation of skin pigmentation through the control of melanocyte migration in the epidermis. The polypeptide is SAM and SH3 domain-containing protein 1 (Sash1) (Mus musculus (Mouse)).